Here is a 94-residue protein sequence, read N- to C-terminus: MLQSNEYFSGKVKSIGFTSSSTGRASVGVMAEGEYAFSTAAPEEMTVVSGALNVLLPGETEWKVYAAGEVFNVPGQSEFHLQVAEPTSYLCRYL.

It belongs to the nucleoside phosphorylase PpnP family.

The catalysed reaction is a purine D-ribonucleoside + phosphate = a purine nucleobase + alpha-D-ribose 1-phosphate. It carries out the reaction adenosine + phosphate = alpha-D-ribose 1-phosphate + adenine. It catalyses the reaction cytidine + phosphate = cytosine + alpha-D-ribose 1-phosphate. The enzyme catalyses guanosine + phosphate = alpha-D-ribose 1-phosphate + guanine. The catalysed reaction is inosine + phosphate = alpha-D-ribose 1-phosphate + hypoxanthine. It carries out the reaction thymidine + phosphate = 2-deoxy-alpha-D-ribose 1-phosphate + thymine. It catalyses the reaction uridine + phosphate = alpha-D-ribose 1-phosphate + uracil. The enzyme catalyses xanthosine + phosphate = alpha-D-ribose 1-phosphate + xanthine. Functionally, catalyzes the phosphorolysis of diverse nucleosides, yielding D-ribose 1-phosphate and the respective free bases. Can use uridine, adenosine, guanosine, cytidine, thymidine, inosine and xanthosine as substrates. Also catalyzes the reverse reactions. This chain is Pyrimidine/purine nucleoside phosphorylase, found in Citrobacter koseri (strain ATCC BAA-895 / CDC 4225-83 / SGSC4696).